A 329-amino-acid chain; its full sequence is MMSDSSSEIDVVKTRIPTYDEDDNTILYAYETKPEFVNKEPNIVSDASCNTEEQLRTVNDVLLHCQVIYDALQNLDKKTDVIRRKVSKIQRFYARSLWTNRKRSGYKKHSYRPVKKLKLQKMKKNEVYETFSYPQSYSPTLPVSRRENNSPSNLPRPPFCMEEYQRAEPEEDPILSRTPSPVHPSDFCEHNYQSYYASDGAMYGSSSGLCLGNPRADSIHNTYSTDHASAVSPSVTRSPVGNDGCIAEGNITKHPSTWSVEAVVLFLKQTDPVALCPLVDLFRSHEVDGKALLLLTSDVLLKHFGVKLGTAVKLCYYIDRLKQGKCFEN.

Phosphoserine is present on residues Ser-138 and Ser-238. A disordered region spans residues 138-157 (SPTLPVSRRENNSPSNLPRP). Residues 258–325 (WSVEAVVLFL…YYIDRLKQGK (68 aa)) enclose the SAM domain.

The protein belongs to the SCM family.

It is found in the nucleus. Putative Polycomb group (PcG) protein. PcG proteins act by forming multiprotein complexes, which are required to maintain the transcriptionally repressive state of homeotic genes throughout development. May be involved in spermatogenesis during sexual maturation. This is Sex comb on midleg-like protein 1 (SCML1) from Pan troglodytes (Chimpanzee).